We begin with the raw amino-acid sequence, 557 residues long: Phosphoacetylglucosamine mutase (557 aa).

The Phosphoserine intermediate role is filled by Ser67. 4 residues coordinate Mg(2+): Ser67, Asp298, Asp300, and Asp302. Phosphoserine is present on Ser67. Substrate contacts are provided by residues 395–397 (EAN), 522–526 (RASGT), and Arg531.

The protein belongs to the phosphohexose mutase family. Mg(2+) is required as a cofactor.

The protein resides in the cytoplasm. The protein localises to the nucleus. The catalysed reaction is N-acetyl-alpha-D-glucosamine 1-phosphate = N-acetyl-D-glucosamine 6-phosphate. It functions in the pathway nucleotide-sugar biosynthesis; UDP-N-acetyl-alpha-D-glucosamine biosynthesis; N-acetyl-alpha-D-glucosamine 1-phosphate from alpha-D-glucosamine 6-phosphate (route I): step 2/2. Its function is as follows. Catalyzes the conversion of GlcNAc-6-P into GlcNAc-1-P during the synthesis of uridine diphosphate/UDP-GlcNAc, which is a biosynthetic precursor of chitin and also supplies the amino sugars for N-linked oligosaccharides of glycoproteins. Also has phosphoglucomutase activity. The sequence is that of Phosphoacetylglucosamine mutase from Saccharomyces cerevisiae (strain ATCC 204508 / S288c) (Baker's yeast).